The primary structure comprises 319 residues: Ferrochelatase (319 aa).

Residues H193 and E274 each coordinate Fe cation.

The protein belongs to the ferrochelatase family.

It is found in the cytoplasm. It carries out the reaction heme b + 2 H(+) = protoporphyrin IX + Fe(2+). Its pathway is porphyrin-containing compound metabolism; protoheme biosynthesis; protoheme from protoporphyrin-IX: step 1/1. In terms of biological role, catalyzes the ferrous insertion into protoporphyrin IX. The polypeptide is Ferrochelatase (Actinobacillus pleuropneumoniae serotype 5b (strain L20)).